We begin with the raw amino-acid sequence, 572 residues long: Urease subunit alpha (572 aa).

Positions 136–572 (GGIDTHIHFI…VPLGQRYFLF (437 aa)) constitute a Urease domain. Positions 141, 143, and 224 each coordinate Ni(2+). Residue Lys-224 is modified to N6-carboxylysine. His-226 contributes to the substrate binding site. Ni(2+) contacts are provided by His-253 and His-279. The active-site Proton donor is the His-327. A Ni(2+)-binding site is contributed by Asp-367.

It belongs to the metallo-dependent hydrolases superfamily. Urease alpha subunit family. As to quaternary structure, heterotrimer of UreA (gamma), UreB (beta) and UreC (alpha) subunits. Three heterotrimers associate to form the active enzyme. Ni cation is required as a cofactor. In terms of processing, carboxylation allows a single lysine to coordinate two nickel ions.

Its subcellular location is the cytoplasm. The enzyme catalyses urea + 2 H2O + H(+) = hydrogencarbonate + 2 NH4(+). Its pathway is nitrogen metabolism; urea degradation; CO(2) and NH(3) from urea (urease route): step 1/1. This is Urease subunit alpha from Haemophilus influenzae (strain PittGG).